The sequence spans 200 residues: 3-isopropylmalate dehydratase small subunit (200 aa).

It belongs to the LeuD family. LeuD type 1 subfamily. As to quaternary structure, heterodimer of LeuC and LeuD.

The catalysed reaction is (2R,3S)-3-isopropylmalate = (2S)-2-isopropylmalate. Its pathway is amino-acid biosynthesis; L-leucine biosynthesis; L-leucine from 3-methyl-2-oxobutanoate: step 2/4. Its function is as follows. Catalyzes the isomerization between 2-isopropylmalate and 3-isopropylmalate, via the formation of 2-isopropylmaleate. The polypeptide is 3-isopropylmalate dehydratase small subunit (Actinobacillus pleuropneumoniae serotype 7 (strain AP76)).